The sequence spans 632 residues: Eukaryotic peptide chain release factor GTP-binding subunit ERF3B (632 aa).

2 disordered regions span residues 1–31 (MDLG…GDGI) and 162–200 (SEAK…SIPS). Basic and acidic residues predominate over residues 178–192 (ESVKEVMEEKEEVRK). The 225-residue stretch at 205 to 429 (KEHVNVVFIG…YLDSLPNFNR (225 aa)) folds into the tr-type G domain. Positions 214 to 221 (GHVDAGKS) are G1. GTP is bound at residue 217-222 (DAGKST). Residues 270 to 274 (GKTVE) form a G2 region. A G3 region spans residues 291-294 (DAPG). Residues 353–356 (NKMD) and 395–397 (SGL) each bind GTP. The segment at 353–356 (NKMD) is G4. The segment at 395 to 397 (SGL) is G5.

It belongs to the TRAFAC class translation factor GTPase superfamily. Classic translation factor GTPase family. ERF3 subfamily. In terms of assembly, component of the eRF1-eRF3-GTP ternary complex, composed of ETF1/ERF1 and ERF3 (GSPT1/ERF3A or GSPT2/ERF3B) and GTP. Component of the transient SURF (SMG1-UPF1-eRF1-eRF3) complex. Interacts with UPF1 and PABPC1. In terms of tissue distribution, highly expressed in brain. Moderately expressed in spleen and lung. Weakly expressed in heart, liver and kidney. Expression during the cell-cycle progression is constant.

Its subcellular location is the cytoplasm. The enzyme catalyses GTP + H2O = GDP + phosphate + H(+). Its function is as follows. GTPase component of the eRF1-eRF3-GTP ternary complex, a ternary complex that mediates translation termination in response to the termination codons UAA, UAG and UGA. GSPT2/ERF3B mediates ETF1/ERF1 delivery to stop codons: The eRF1-eRF3-GTP complex binds to a stop codon in the ribosomal A-site. GTP hydrolysis by GSPT2/ERF3B induces a conformational change that leads to its dissociation, permitting ETF1/ERF1 to accommodate fully in the A-site. Component of the transient SURF complex which recruits UPF1 to stalled ribosomes in the context of nonsense-mediated decay (NMD) of mRNAs containing premature stop codons. In Mus musculus (Mouse), this protein is Eukaryotic peptide chain release factor GTP-binding subunit ERF3B (Gspt2).